A 189-amino-acid polypeptide reads, in one-letter code: uncharacterized protein (189 aa).

The first 23 residues, 1 to 23 (MVPPKPALWALLLALLGTAPSRA), serve as a signal peptide directing secretion. N72 carries an N-linked (GlcNAc...) asparagine glycan.

This is an uncharacterized protein from Homo sapiens (Human).